The sequence spans 111 residues: Large ribosomal subunit protein uL22 (111 aa).

The protein belongs to the universal ribosomal protein uL22 family. As to quaternary structure, part of the 50S ribosomal subunit.

Its function is as follows. This protein binds specifically to 23S rRNA; its binding is stimulated by other ribosomal proteins, e.g. L4, L17, and L20. It is important during the early stages of 50S assembly. It makes multiple contacts with different domains of the 23S rRNA in the assembled 50S subunit and ribosome. Functionally, the globular domain of the protein is located near the polypeptide exit tunnel on the outside of the subunit, while an extended beta-hairpin is found that lines the wall of the exit tunnel in the center of the 70S ribosome. The sequence is that of Large ribosomal subunit protein uL22 from Acidithiobacillus ferrooxidans (strain ATCC 23270 / DSM 14882 / CIP 104768 / NCIMB 8455) (Ferrobacillus ferrooxidans (strain ATCC 23270)).